Consider the following 311-residue polypeptide: Insulin-like growth factor-binding protein 2 (311 aa).

The N-terminal stretch at 1-36 is a signal peptide; that stretch reads MALGGVGRGGAARAAWPRLLLAALAPALALAGPALP. Residues 38–120 form the IGFBP N-terminal domain; it reads VLFRCPPCTA…VQGQGTCARP (83 aa). 6 cysteine pairs are disulfide-bonded: Cys42-Cys70, Cys45-Cys72, Cys53-Cys73, Cys61-Cys76, Cys84-Cys97, and Cys91-Cys117. 2 disordered regions span residues 112-168 and 188-210; these read QGQG…PLKT and GKVG…TGRT. The region spanning 209 to 291 is the Thyroglobulin type-1 domain; sequence RTPCQQELDQ…APTIRGDPEC (83 aa). Disulfide bonds link Cys212-Cys246, Cys257-Cys268, and Cys270-Cys291. Residues 286–288 carry the Cell attachment site motif; the sequence is RGD.

In terms of assembly, binds IGF2 more than IGF1.

The protein resides in the secreted. Inhibits IGF-mediated growth and developmental rates. IGF-binding proteins prolong the half-life of the IGFs and have been shown to either inhibit or stimulate the growth promoting effects of the IGFs on cell culture. They alter the interaction of IGFs with their cell surface receptors. The protein is Insulin-like growth factor-binding protein 2 (IGFBP2) of Gallus gallus (Chicken).